A 96-amino-acid chain; its full sequence is uncharacterized protein (96 aa).

Helical transmembrane passes span 3–23 (KLTI…QLFA), 30–50 (TLGN…LASI), and 68–88 (IGLL…IIII).

The protein resides in the cell membrane. This is an uncharacterized protein from Bacillus subtilis (strain 168).